The following is a 125-amino-acid chain: Actin, alpha skeletal muscle (125 aa).

Belongs to the actin family. In terms of assembly, polymerization of globular actin (G-actin) leads to a structural filament (F-actin) in the form of a two-stranded helix. Each actin can bind to 4 others. In terms of processing, methylated at His-75 by SETD3.

The protein localises to the cytoplasm. It is found in the cytoskeleton. In terms of biological role, actins are highly conserved proteins that are involved in various types of cell motility and are ubiquitously expressed in all eukaryotic cells. This Pleurodeles waltl (Iberian ribbed newt) protein is Actin, alpha skeletal muscle.